The sequence spans 641 residues: Epithelial sodium channel subunit beta (641 aa).

The Cytoplasmic portion of the chain corresponds to methionine 1 to alanine 50. A helical transmembrane segment spans residues methionine 51–isoleucine 71. At lysine 72 to glycine 533 the chain is on the extracellular side. Intrachain disulfides connect cysteine 98–cysteine 273, cysteine 185–cysteine 190, cysteine 197–cysteine 204, cysteine 250–cysteine 257, cysteine 362–cysteine 449, cysteine 387–cysteine 445, cysteine 391–cysteine 441, cysteine 400–cysteine 427, and cysteine 402–cysteine 416. Asparagine 141 carries an N-linked (GlcNAc...) asparagine glycan. N-linked (GlcNAc...) asparagine glycosylation is found at asparagine 261 and asparagine 379. The helical transmembrane segment at serine 534–isoleucine 554 threads the bilayer. Over lysine 555–valine 641 the chain is Cytoplasmic. Residues glycine 596 to valine 641 are disordered. The PY motif; recruits WW domain-containing proteins and is thereby required for ubiquitination and inhibition of the channel by NEDD4 and NEDD4L motif lies at proline 617–tyrosine 621. The span at valine 632–valine 641 shows a compositional bias: acidic residues. Phosphoserine occurs at positions 634 and 636.

Belongs to the amiloride-sensitive sodium channel (TC 1.A.6) family. SCNN1B subfamily. Component of the heterotrimeric epithelial sodium channel (ENaC) composed of an alpha/SCNN1A, a beta/SCNN1B and a gamma/SCNN1G subunit. Interacts with WWP1 (via WW domains). Interacts with WWP2 (via WW domains); inhibits the channel. Interacts with the full-length immature form of PCSK9 (pro-PCSK9). Interacts (N-glycosylated) with BPIFA1; the interaction is direct and inhibits the proteolytic processing of SCNN1A and SCNN1G and the activation of ENaC. Ubiquitinated. Can be ubiquitinated at multiple sites and undergo monoubiquitination and polyubiquitination. Ubiquitination by NEDD4 or NEDD4L inhibits the ENaC channel through endocytosis, intracellular retention and degradation of its individual subunits. However, some studies could not confirm the ubiquitination of this subunit of the ENaC. In terms of processing, phosphorylated on serine and threonine residues. Aldosterone and insulin increase the basal level of phosphorylation. Post-translationally, N-glycosylated. N-glycosylation is required for interaction with BPIFA1.

Its subcellular location is the apical cell membrane. The protein resides in the cytoplasmic vesicle membrane. It catalyses the reaction Na(+)(in) = Na(+)(out). With respect to regulation, originally identified and characterized by its inhibition by the diuretic drug amiloride. Its function is as follows. This is one of the three pore-forming subunits of the heterotrimeric epithelial sodium channel (ENaC), a critical regulator of sodium balance and fluid homeostasis. ENaC operates in epithelial tissues, where it mediates the electrodiffusion of sodium ions from extracellular fluid through the apical membrane of cells, with water following osmotically. It plays a key role in maintaining sodium homeostasis through electrogenic sodium reabsorption in the kidneys. Additionally, ENaC is essential for airway surface liquid homeostasis, which is crucial for proper mucus clearance. This chain is Epithelial sodium channel subunit beta, found in Oryctolagus cuniculus (Rabbit).